The primary structure comprises 290 residues: Small ribosomal subunit protein uS2 (290 aa).

Residues 269–290 (WEAEASGDWAAESAQPNPETKW) form a disordered region.

Belongs to the universal ribosomal protein uS2 family. Component of the small ribosomal subunit. Mature ribosomes consist of a small (40S) and a large (60S) subunit. The 40S subunit contains about 33 different proteins and 1 molecule of RNA (18S). The 60S subunit contains about 49 different proteins and 3 molecules of RNA (25S, 5.8S and 5S). Interacts with rps21.

It localises to the cytoplasm. Functionally, required for the assembly and/or stability of the 40S ribosomal subunit. Required for the processing of the 20S rRNA-precursor to mature 18S rRNA in a late step of the maturation of 40S ribosomal subunits. This chain is Small ribosomal subunit protein uS2 (rps0), found in Talaromyces marneffei (strain ATCC 18224 / CBS 334.59 / QM 7333) (Penicillium marneffei).